Reading from the N-terminus, the 256-residue chain is Ribonuclease HII (256 aa).

The RNase H type-2 domain maps to 67–255 (QLVGGVDEVG…VSEMVGLKKA (189 aa)). Asp73, Glu74, and Asp165 together coordinate a divalent metal cation.

It belongs to the RNase HII family. The cofactor is Mn(2+). It depends on Mg(2+) as a cofactor.

It is found in the cytoplasm. It carries out the reaction Endonucleolytic cleavage to 5'-phosphomonoester.. Functionally, endonuclease that specifically degrades the RNA of RNA-DNA hybrids. The chain is Ribonuclease HII from Lactobacillus delbrueckii subsp. bulgaricus (strain ATCC 11842 / DSM 20081 / BCRC 10696 / JCM 1002 / NBRC 13953 / NCIMB 11778 / NCTC 12712 / WDCM 00102 / Lb 14).